The sequence spans 407 residues: Phosphopentomutase (407 aa).

Mn(2+) is bound by residues aspartate 10, aspartate 306, histidine 311, aspartate 347, histidine 348, and histidine 359.

The protein belongs to the phosphopentomutase family. It depends on Mn(2+) as a cofactor.

The protein resides in the cytoplasm. The enzyme catalyses 2-deoxy-alpha-D-ribose 1-phosphate = 2-deoxy-D-ribose 5-phosphate. The catalysed reaction is alpha-D-ribose 1-phosphate = D-ribose 5-phosphate. Its pathway is carbohydrate degradation; 2-deoxy-D-ribose 1-phosphate degradation; D-glyceraldehyde 3-phosphate and acetaldehyde from 2-deoxy-alpha-D-ribose 1-phosphate: step 1/2. Functionally, isomerase that catalyzes the conversion of deoxy-ribose 1-phosphate (dRib-1-P) and ribose 1-phosphate (Rib-1-P) to deoxy-ribose 5-phosphate (dRib-5-P) and ribose 5-phosphate (Rib-5-P), respectively. The protein is Phosphopentomutase of Yersinia pestis bv. Antiqua (strain Antiqua).